Here is a 237-residue protein sequence, read N- to C-terminus: Phosphoribosylaminoimidazole-succinocarboxamide synthase (237 aa).

This sequence belongs to the SAICAR synthetase family.

The catalysed reaction is 5-amino-1-(5-phospho-D-ribosyl)imidazole-4-carboxylate + L-aspartate + ATP = (2S)-2-[5-amino-1-(5-phospho-beta-D-ribosyl)imidazole-4-carboxamido]succinate + ADP + phosphate + 2 H(+). Its pathway is purine metabolism; IMP biosynthesis via de novo pathway; 5-amino-1-(5-phospho-D-ribosyl)imidazole-4-carboxamide from 5-amino-1-(5-phospho-D-ribosyl)imidazole-4-carboxylate: step 1/2. This chain is Phosphoribosylaminoimidazole-succinocarboxamide synthase, found in Listeria monocytogenes serotype 4b (strain CLIP80459).